The following is a 1055-amino-acid chain: Elongation factor 3 (1055 aa).

ADP is bound at residue Val45. HEAT repeat units lie at residues Phe48–Ala86, Ser96–Pro133, Trp134–Phe172, Glu176–Asn213, Lys218–Ile255, Leu257–Ser290, and Pro296–Glu337. ABC transporter domains follow at residues Cys447–Gln659 and Leu687–Ala1004. Residues Asn723, Glu933, Asn936, and His962 each coordinate ADP. The disordered stretch occupies residues Glu1024–Leu1055. Basic residues predominate over residues Arg1033–Lys1044.

Belongs to the ABC transporter superfamily. ABCF family. EF3 subfamily. As to quaternary structure, interacts with CCH1; the interaction is direct and required for the localization of CCH1 to the cell membrane.

Its subcellular location is the cytoplasm. The protein resides in the cytosol. It carries out the reaction ATP + H2O = ADP + phosphate + H(+). It functions in the pathway protein biosynthesis; polypeptide chain elongation. Its function is as follows. Ribosome-dependent ATPase that functions in cytoplasmic translation elongation. Required for the ATP-dependent release of deacylated tRNA from the ribosomal E-site during protein biosynthesis. Stimulates the eEF1A-dependent binding of aminoacyl-tRNA to the ribosomal A-site, which has reduced affinity for tRNA as long as the E-site is occupied. Assists translation termination by stimulating the release of nascent protein from the ribosome by release factors. Appears to localize calcium-channel protein CCH1 to the plasma membrane. In Cryptococcus neoformans var. grubii serotype A (strain H99 / ATCC 208821 / CBS 10515 / FGSC 9487) (Filobasidiella neoformans var. grubii), this protein is Elongation factor 3.